We begin with the raw amino-acid sequence, 181 residues long: Insulin-like growth factor 2 (181 aa).

Residues 1 to 24 (MGIPVGKSLLMLFTFLAFASCCIA) form the signal peptide. The segment at 25 to 52 (AYRPSETLCGGELVDTLQFVCGDRGFYF) is b. 3 disulfides stabilise this stretch: Cys-33–Cys-71, Cys-45–Cys-84, and Cys-70–Cys-75. Residues 53 to 64 (SRPASRINRRSR) form a c region. Positions 65–85 (GIVEECCFRSCDLALLETYCA) are a. The segment at 86 to 91 (TPAKSE) is d. Positions 92–181 (RDVSTPPTVL…AFVEVSSDLQ (90 aa)) are cleaved as a propeptide — e peptide. Thr-163 carries O-linked (GalNAc...) threonine glycosylation.

Belongs to the insulin family. In terms of assembly, interacts with MYORG; this interaction is required for IGF2 secretion. Interacts with integrins ITGAV:ITGB3 and ITGA6:ITGB4; integrin-binding is required for IGF2 signaling. Interacts with IGFBP2. Proteolytically processed by PCSK4, proIGF2 is cleaved at Arg-128 and Arg-92 to generate big-IGF2 and mature IGF2.

It is found in the secreted. Functionally, the insulin-like growth factors possess growth-promoting activity. Major fetal growth hormone in mammals. Plays a key role in regulating fetoplacental development. IGF2 is influenced by placental lactogen. Also involved in tissue differentiation. In adults, involved in glucose metabolism in adipose tissue, skeletal muscle and liver. Acts as a ligand for integrin which is required for IGF2 signaling. Positively regulates myogenic transcription factor MYOD1 function by facilitating the recruitment of transcriptional coactivators, thereby controlling muscle terminal differentiation. Inhibits myoblast differentiation and modulates metabolism via increasing the mitochondrial respiration rate. Preptin undergoes glucose-mediated co-secretion with insulin, and acts as a physiological amplifier of glucose-mediated insulin secretion. Exhibits osteogenic properties by increasing osteoblast mitogenic activity through phosphoactivation of MAPK1 and MAPK3. The protein is Insulin-like growth factor 2 of Equus caballus (Horse).